A 122-amino-acid chain; its full sequence is Large ribosomal subunit protein uL18 (122 aa).

This sequence belongs to the universal ribosomal protein uL18 family. In terms of assembly, part of the 50S ribosomal subunit; part of the 5S rRNA/L5/L18/L25 subcomplex. Contacts the 5S and 23S rRNAs.

In terms of biological role, this is one of the proteins that bind and probably mediate the attachment of the 5S RNA into the large ribosomal subunit, where it forms part of the central protuberance. The chain is Large ribosomal subunit protein uL18 from Dictyoglomus turgidum (strain DSM 6724 / Z-1310).